A 60-amino-acid chain; its full sequence is Snake venom metalloproteinase bothrojaractivase (60 aa).

The Peptidase M12B domain maps to 1–60; sequence RYIELAVVADHGMFTKYRVHELVNTVNGFFRSKQDLIKVQKDKTLTSFGEWRERDLLPRI. Glu4 is a Ca(2+) binding site.

The protein belongs to the venom metalloproteinase (M12B) family. P-I subfamily. Monomer. The cofactor is Zn(2+). In terms of tissue distribution, expressed by the venom gland.

The protein localises to the secreted. Its activity is regulated as follows. Completely inhibited by EDTA and EGTA. Partially inhibited by serine proteinase inhibitors PMSF and benzamidine. Not inhibited by cysteine proteinase inhibitors mercury ions and E-64. Is active without cofactors, although the presence of low concentrations of calcium and zinc ions enhanced its ability to convert prothrombin (F2) into active thrombin. Functionally, prothrombin (F2) activator that is cofactor-independent. Also has fibrinolytic and fibrinogenolytic activity. It degrades the Aalpha-chain and more slowly the Bbeta-chain of fibrin and fibrinogen, while the gamma-chain is only partially and slowly affected. A dose-dependent procoagulant activity is shown in human plasma. The protein is Snake venom metalloproteinase bothrojaractivase of Bothrops jararaca (Jararaca).